We begin with the raw amino-acid sequence, 171 residues long: Actin-related protein 2/3 complex subunit 4 (171 aa).

It belongs to the ARPC4 family. Component of the Arp2/3 complex composed of ARP2, ARP3, ARC40/p41-ARC, ARC35/p34-ARC, ARC18/p21-ARC, ARC19/p20-ARC and ARC16/p16-ARC.

Its subcellular location is the cytoplasm. The protein resides in the cytoskeleton. The protein localises to the actin patch. In terms of biological role, functions as actin-binding component of the Arp2/3 complex which is involved in regulation of actin polymerization and together with an activating nucleation-promoting factor (NPF) mediates the formation of branched actin networks. Seems to contact the mother actin filament. This chain is Actin-related protein 2/3 complex subunit 4 (ARC19), found in Saccharomyces cerevisiae (strain ATCC 204508 / S288c) (Baker's yeast).